The chain runs to 691 residues: DNA ligase (691 aa).

NAD(+) contacts are provided by residues 41-45 (DAEYD), 90-91 (SL), and E130. The active-site N6-AMP-lysine intermediate is the K132. NAD(+) contacts are provided by R153, E190, K307, and K331. The Zn(2+) site is built by C425, C428, C443, and C449. A BRCT domain is found at 610–691 (APQGVLAGKT…LHQLLEGNTP (82 aa)).

Belongs to the NAD-dependent DNA ligase family. LigA subfamily. It depends on Mg(2+) as a cofactor. Requires Mn(2+) as cofactor.

The enzyme catalyses NAD(+) + (deoxyribonucleotide)n-3'-hydroxyl + 5'-phospho-(deoxyribonucleotide)m = (deoxyribonucleotide)n+m + AMP + beta-nicotinamide D-nucleotide.. Its function is as follows. DNA ligase that catalyzes the formation of phosphodiester linkages between 5'-phosphoryl and 3'-hydroxyl groups in double-stranded DNA using NAD as a coenzyme and as the energy source for the reaction. It is essential for DNA replication and repair of damaged DNA. This chain is DNA ligase, found in Burkholderia cenocepacia (strain ATCC BAA-245 / DSM 16553 / LMG 16656 / NCTC 13227 / J2315 / CF5610) (Burkholderia cepacia (strain J2315)).